A 1249-amino-acid chain; its full sequence is Calmodulin-regulated spectrin-associated protein 3 (1249 aa).

Disordered regions lie at residues 183–205 (KTEQEAAQRASPAAPADGAAPAQ), 328–385 (PDGH…SMSH), 430–457 (VSSDSLGPPRPAPARTPTQPPPEPGDLP), 473–609 (LLPD…RLEE), 632–696 (LGKS…HEGL), 714–1029 (QRDM…SALA), and 1061–1111 (NNLG…TGPR). Thr-184 is modified (phosphothreonine). The segment covering 189–205 (AQRASPAAPADGAAPAQ) has biased composition (low complexity). At Ser-193 the chain carries Phosphoserine. The region spanning 203–312 (PAQPSIRYRK…LVVMLAELFM (110 aa)) is the Calponin-homology (CH) domain. Ser-334, Ser-341, Ser-347, Ser-351, Ser-368, Ser-373, and Ser-382 each carry phosphoserine. Positions 341 to 352 (SPPQNNSGSSSP) are enriched in low complexity. Polar residues predominate over residues 364–383 (GGPQSPLRGSTGSLKSSPSM). A compositionally biased stretch (pro residues) spans 437–454 (PPRPAPARTPTQPPPEPG). Residues Ser-547, Ser-554, and Ser-560 each carry the phosphoserine modification. Positions 568-579 (AERKKQLVKAEA) are enriched in basic and acidic residues. The span at 594–604 (EALSSEMSELS) shows a compositional bias: low complexity. Residues 594-628 (EALSSEMSELSARLEEKRRAIEAQKRRIEAIFAKH) adopt a coiled-coil conformation. A compositionally biased stretch (acidic residues) spans 647-657 (GEAEAEAEEAD). At Ser-685 the chain carries Phosphoserine. The stretch at 696-729 (LGEYNRAVSKLSAALSSLQRDMQRLTDQQQRLLA) forms a coiled coil. The span at 731-741 (PEAPGSAPPPA) shows a compositional bias: pro residues. Positions 754–779 (AASPSPARRVPATRRSPGPGPSQSPR) are enriched in low complexity. Position 769 is a phosphoserine (Ser-769). Thr-799 carries the phosphothreonine modification. Residue Ser-814 is modified to Phosphoserine. Polar residues predominate over residues 814 to 825 (SPSQVPVQTRSS). The span at 889–940 (YKDEDKPEDEMAQKRASLLERQQRRAEEARRRKQWQEVEKEQRREEAARLAQ) shows a compositional bias: basic and acidic residues. Positions 896 to 935 (EDEMAQKRASLLERQQRRAEEARRRKQWQEVEKEQRREEA) form a coiled coil. Over residues 950–964 (VSAVPMATPAPAARA) the composition is skewed to low complexity. Basic and acidic residues predominate over residues 970 to 998 (VGPRKGDFTRQEYERRAQLKLMDDLDKVL). Position 1074 is a phosphoserine (Ser-1074). One can recognise a CKK domain in the interval 1109–1243 (GPRLYKEPSA…QGKKPTTPKK (135 aa)).

It belongs to the CAMSAP1 family. As to quaternary structure, interacts with PLEKHA7. Interacts with CAMSAP2. Interacts with KATNA1 and KATNB1; leading to regulate the length of CAMSAP3-decorated microtubule stretches. Interacts with AKAP9; regulating Golgi assembly in epithelial cells. Interacts with MACF1. Interacts with AKNA.

It localises to the cytoplasm. The protein localises to the cytoskeleton. Its subcellular location is the cell junction. The protein resides in the adherens junction. It is found in the cilium axoneme. It localises to the cilium basal body. Key microtubule-organizing protein that specifically binds the minus-end of non-centrosomal microtubules and regulates their dynamics and organization. Specifically recognizes growing microtubule minus-ends and autonomously decorates and stabilizes microtubule lattice formed by microtubule minus-end polymerization. Acts on free microtubule minus-ends that are not capped by microtubule-nucleating proteins or other factors and protects microtubule minus-ends from depolymerization. In addition, it also reduces the velocity of microtubule polymerization. Required for the biogenesis and the maintenance of zonula adherens by anchoring the minus-end of microtubules to zonula adherens and by recruiting the kinesin KIFC3 to those junctional sites. Required for orienting the apical-to-basal polarity of microtubules in epithelial cells: acts by tethering non-centrosomal microtubules to the apical cortex, leading to their longitudinal orientation. Plays a key role in early embryos, which lack centrosomes: accumulates at the microtubule bridges that connect pairs of cells and enables the formation of a non-centrosomal microtubule-organizing center that directs intracellular transport in the early embryo. Couples non-centrosomal microtubules with actin: interaction with MACF1 at the minus ends of non-centrosomal microtubules, tethers the microtubules to actin filaments, regulating focal adhesion size and cell migration. Plays a key role in the generation of non-centrosomal microtubules by accumulating in the pericentrosomal region and cooperating with KATNA1 to release non-centrosomal microtubules from the centrosome. Through the microtubule cytoskeleton, also regulates the organization of cellular organelles including the Golgi and the early endosomes. Through interaction with AKAP9, involved in translocation of Golgi vesicles in epithelial cells, where microtubules are mainly non-centrosomal. Plays an important role in motile cilia function by facilitatating proper orientation of basal bodies and formation of central microtubule pairs in motile cilia. The sequence is that of Calmodulin-regulated spectrin-associated protein 3 from Homo sapiens (Human).